The primary structure comprises 95 residues: UPF0358 protein BCE_3996 (95 aa).

The protein belongs to the UPF0358 family.

This is UPF0358 protein BCE_3996 from Bacillus cereus (strain ATCC 10987 / NRS 248).